The chain runs to 220 residues: Peptide methionine sulfoxide reductase MsrA (220 aa).

Residue cysteine 52 is part of the active site.

It belongs to the MsrA Met sulfoxide reductase family.

The enzyme catalyses L-methionyl-[protein] + [thioredoxin]-disulfide + H2O = L-methionyl-(S)-S-oxide-[protein] + [thioredoxin]-dithiol. It carries out the reaction [thioredoxin]-disulfide + L-methionine + H2O = L-methionine (S)-S-oxide + [thioredoxin]-dithiol. Its function is as follows. Has an important function as a repair enzyme for proteins that have been inactivated by oxidation. Catalyzes the reversible oxidation-reduction of methionine sulfoxide in proteins to methionine. The chain is Peptide methionine sulfoxide reductase MsrA from Corynebacterium diphtheriae (strain ATCC 700971 / NCTC 13129 / Biotype gravis).